The chain runs to 689 residues: Glycine--tRNA ligase beta subunit (689 aa).

This sequence belongs to the class-II aminoacyl-tRNA synthetase family. Tetramer of two alpha and two beta subunits.

Its subcellular location is the cytoplasm. It catalyses the reaction tRNA(Gly) + glycine + ATP = glycyl-tRNA(Gly) + AMP + diphosphate. In Actinobacillus pleuropneumoniae serotype 3 (strain JL03), this protein is Glycine--tRNA ligase beta subunit.